The primary structure comprises 310 residues: MDVIKTQQISARTIEKVIVHPLVLLSIVDHYNRVAKDTSKRVVGVLLGSSSRGTVDVTNSYAVPFEEDDKDTSIWFLDHNYHESMFHMFKRINAKEHIVGWYSTGPKLRENDLDVHALFNGYVPNPVLVIIDVQPKELGIPTKAYYAVEEVKENATQKSQQVFVHVPTEIAAHEVEEIGVEHLLRDVKDTTISTLATEVTAKLTALKGLDARLREIRTYLDLVIEGKLPLNHEILYHLQDVFNLLPNLNVNELVKAFAVKTNDMMLVIYLSSLIRSVIALHSLINNKLLNKEHEKAEDSKPVDIPLITES.

Met1 is modified (N-acetylmethionine). The 138-residue stretch at 17 to 154 folds into the MPN domain; it reads VIVHPLVLLS…YYAVEEVKEN (138 aa).

Belongs to the peptidase M67A family. As to quaternary structure, component of the 19S regulatory particle (RP/PA700) lid subcomplex of the 26S proteasome. The 26S proteasome is composed of a core protease (CP), known as the 20S proteasome, capped at one or both ends by the 19S regulatory particle (RP/PA700). The RP/PA700 complex is composed of at least 17 different subunits in two subcomplexes, the base and the lid, which form the portions proximal and distal to the 20S proteolytic core, respectively.

Functionally, acts as a regulatory subunit of the 26S proteasome which is involved in the ATP-dependent degradation of ubiquitinated proteins. The sequence is that of 26S proteasome non-ATPase regulatory subunit 7 homolog B (RPN8B) from Arabidopsis thaliana (Mouse-ear cress).